Reading from the N-terminus, the 952-residue chain is Calsyntenin-1 (952 aa).

The N-terminal stretch at 1-28 (MLRRPAPALARAVRLLLAGLLYGGGVWA) is a signal peptide. Residues 29-830 (ARVNKHKPWL…PHPFAVVPST (802 aa)) are Extracellular-facing. Cadherin domains are found at residues 38–154 (LEPT…APVF) and 155–255 (KEKS…SPGW). Asparagine 356 carries an N-linked (GlcNAc...) asparagine glycan. A helical membrane pass occupies residues 831–851 (ATVVIVVCVSFLVFMIILGVF). At 852–952 (RIRAAHQRTM…LEWDYSTLSY (101 aa)) the chain is on the cytoplasmic side. The interval 886-952 (METYEDQHSS…LEWDYSTLSY (67 aa)) is disordered. Over residues 896 to 930 (EEEEEEEEEEESEDGEEEEDITSAESESSEEEEGG) the composition is skewed to acidic residues. The span at 934 to 952 (GQNTTRQQQLEWDYSTLSY) shows a compositional bias: polar residues.

This sequence belongs to the calsyntenin family. Directly interacts with APBA2. Forms a tripartite complex with APBA2 and APP. Interacts with KLC1. In terms of assembly, interacts with APBB1; this interaction stabilizes AlcICD metabolism. As to quaternary structure, interacts with PSEN1. Post-translationally, proteolytically processed under normal cellular conditions. A primary zeta-cleavage generates a large extracellular (soluble) N-terminal domain (sAlc) and a short C-terminal transmembrane fragment (CTF1). A secondary cleavage catalyzed by presenilin gamma-secretase within the transmembrane domain releases the beta-Alc-alpha chain in the extracellular milieu and produces an intracellular fragment (AlcICD). This processing is strongly suppressed in the tripartite complex formed with APBA2 and APP, which seems to prevent the association with PSEN1. In terms of tissue distribution, preferentially expressed in the retina and brain.

The protein resides in the postsynaptic cell membrane. It is found in the endoplasmic reticulum membrane. Its subcellular location is the golgi apparatus membrane. It localises to the cell projection. The protein localises to the neuron projection. The protein resides in the nucleus. In terms of biological role, postsynaptic adhesion molecule that binds to presynaptic neurexins to mediate both excitatory and inhibitory synapse formation. Promotes synapse development by acting as a cell adhesion molecule at the postsynaptic membrane, which associates with neurexin-alpha at the presynaptic membrane. Also functions as a cargo in axonal anterograde transport by acting as a molecular adapter that promotes KLC1 association with vesicles. Complex formation with APBA2 and APP, stabilizes APP metabolism and enhances APBA2-mediated suppression of beta-APP40 secretion, due to the retardation of intracellular APP maturation. As intracellular fragment AlcICD, suppresses APBB1-dependent transactivation stimulated by APP C-terminal intracellular fragment (AICD), most probably by competing with AICD for APBB1-binding. Its function is as follows. In complex with APBA2 and C99, a C-terminal APP fragment, abolishes C99 interaction with PSEN1 and thus APP C99 cleavage by gamma-secretase, most probably through stabilization of the direct interaction between APBA2 and APP. The sequence is that of Calsyntenin-1 (Clstn1) from Rattus norvegicus (Rat).